The sequence spans 423 residues: Serine--tRNA ligase (423 aa).

231–233 serves as a coordination point for L-serine; that stretch reads TAE. 262-264 provides a ligand contact to ATP; it reads RSE. Glu285 contacts L-serine. Residue 349–352 coordinates ATP; the sequence is EIGS. Ser385 serves as a coordination point for L-serine.

This sequence belongs to the class-II aminoacyl-tRNA synthetase family. Type-1 seryl-tRNA synthetase subfamily. Homodimer. The tRNA molecule binds across the dimer.

It localises to the cytoplasm. The catalysed reaction is tRNA(Ser) + L-serine + ATP = L-seryl-tRNA(Ser) + AMP + diphosphate + H(+). It catalyses the reaction tRNA(Sec) + L-serine + ATP = L-seryl-tRNA(Sec) + AMP + diphosphate + H(+). Its pathway is aminoacyl-tRNA biosynthesis; selenocysteinyl-tRNA(Sec) biosynthesis; L-seryl-tRNA(Sec) from L-serine and tRNA(Sec): step 1/1. Catalyzes the attachment of serine to tRNA(Ser). Is also able to aminoacylate tRNA(Sec) with serine, to form the misacylated tRNA L-seryl-tRNA(Sec), which will be further converted into selenocysteinyl-tRNA(Sec). In Acholeplasma laidlawii (strain PG-8A), this protein is Serine--tRNA ligase.